We begin with the raw amino-acid sequence, 158 residues long: Crossover junction endodeoxyribonuclease RuvC (158 aa).

Active-site residues include D7, E66, and D139. Mg(2+) is bound by residues D7, E66, and D139.

This sequence belongs to the RuvC family. As to quaternary structure, homodimer which binds Holliday junction (HJ) DNA. The HJ becomes 2-fold symmetrical on binding to RuvC with unstacked arms; it has a different conformation from HJ DNA in complex with RuvA. In the full resolvosome a probable DNA-RuvA(4)-RuvB(12)-RuvC(2) complex forms which resolves the HJ. Requires Mg(2+) as cofactor.

Its subcellular location is the cytoplasm. It carries out the reaction Endonucleolytic cleavage at a junction such as a reciprocal single-stranded crossover between two homologous DNA duplexes (Holliday junction).. In terms of biological role, the RuvA-RuvB-RuvC complex processes Holliday junction (HJ) DNA during genetic recombination and DNA repair. Endonuclease that resolves HJ intermediates. Cleaves cruciform DNA by making single-stranded nicks across the HJ at symmetrical positions within the homologous arms, yielding a 5'-phosphate and a 3'-hydroxyl group; requires a central core of homology in the junction. The consensus cleavage sequence is 5'-(A/T)TT(C/G)-3'. Cleavage occurs on the 3'-side of the TT dinucleotide at the point of strand exchange. HJ branch migration catalyzed by RuvA-RuvB allows RuvC to scan DNA until it finds its consensus sequence, where it cleaves and resolves the cruciform DNA. The sequence is that of Crossover junction endodeoxyribonuclease RuvC from Campylobacter lari (strain RM2100 / D67 / ATCC BAA-1060).